The sequence spans 177 residues: tRNA-splicing endonuclease (177 aa).

Active-site residues include Tyr114, His123, and Lys154.

Belongs to the tRNA-intron endonuclease family. Archaeal short subfamily. As to quaternary structure, homotetramer; although the tetramer contains four active sites, only two participate in the cleavage. Therefore, it should be considered as a dimer of dimers.

The enzyme catalyses pretRNA = a 3'-half-tRNA molecule with a 5'-OH end + a 5'-half-tRNA molecule with a 2',3'-cyclic phosphate end + an intron with a 2',3'-cyclic phosphate and a 5'-hydroxyl terminus.. In terms of biological role, endonuclease that removes tRNA introns. Cleaves pre-tRNA at the 5'- and 3'-splice sites to release the intron. The products are an intron and two tRNA half-molecules bearing 2',3' cyclic phosphate and 5'-OH termini. Recognizes a pseudosymmetric substrate in which 2 bulged loops of 3 bases are separated by a stem of 4 bp. The polypeptide is tRNA-splicing endonuclease (Methanococcus maripaludis (strain DSM 14266 / JCM 13030 / NBRC 101832 / S2 / LL)).